We begin with the raw amino-acid sequence, 260 residues long: Hydroxyethylthiazole kinase (260 aa).

Position 38 (Met-38) interacts with substrate. ATP is bound by residues Arg-114 and Thr-159. Position 186 (Gly-186) interacts with substrate.

Belongs to the Thz kinase family. Requires Mg(2+) as cofactor.

The catalysed reaction is 5-(2-hydroxyethyl)-4-methylthiazole + ATP = 4-methyl-5-(2-phosphooxyethyl)-thiazole + ADP + H(+). The protein operates within cofactor biosynthesis; thiamine diphosphate biosynthesis; 4-methyl-5-(2-phosphoethyl)-thiazole from 5-(2-hydroxyethyl)-4-methylthiazole: step 1/1. Its function is as follows. Catalyzes the phosphorylation of the hydroxyl group of 4-methyl-5-beta-hydroxyethylthiazole (THZ). This Helicobacter pylori (strain HPAG1) protein is Hydroxyethylthiazole kinase.